A 132-amino-acid polypeptide reads, in one-letter code: MTMSDPIADMLTRVRNANMVRHEKLELPASNIKKEIAEILKREGFVKSVEYIEDDKQGVIRMFLKYGANNERVITGLKRISKPGLRVYAKADELPKVLNGLGIALVSTSEGVLTDKEARQRNIGGEVLAYIW.

The protein belongs to the universal ribosomal protein uS8 family. Part of the 30S ribosomal subunit. Contacts proteins S5 and S12.

Its function is as follows. One of the primary rRNA binding proteins, it binds directly to 16S rRNA central domain where it helps coordinate assembly of the platform of the 30S subunit. The chain is Small ribosomal subunit protein uS8 from Macrococcus caseolyticus (strain JCSC5402) (Macrococcoides caseolyticum).